Consider the following 499-residue polypeptide: Glycerol kinase (499 aa).

Thr12 contacts ADP. The ATP site is built by Thr12, Thr13, and Ser14. Thr12 provides a ligand contact to sn-glycerol 3-phosphate. Arg16 is an ADP binding site. 4 residues coordinate sn-glycerol 3-phosphate: Arg82, Glu83, Tyr134, and Asp245. Glycerol-binding residues include Arg82, Glu83, Tyr134, Asp245, and Gln246. Thr267 and Gly311 together coordinate ADP. ATP is bound by residues Thr267, Gly311, Gln315, and Gly412. Residues Gly412 and Asn416 each coordinate ADP.

The protein belongs to the FGGY kinase family.

It catalyses the reaction glycerol + ATP = sn-glycerol 3-phosphate + ADP + H(+). Its pathway is polyol metabolism; glycerol degradation via glycerol kinase pathway; sn-glycerol 3-phosphate from glycerol: step 1/1. Its activity is regulated as follows. Inhibited by fructose 1,6-bisphosphate (FBP). In terms of biological role, key enzyme in the regulation of glycerol uptake and metabolism. Catalyzes the phosphorylation of glycerol to yield sn-glycerol 3-phosphate. This chain is Glycerol kinase, found in Acidiphilium cryptum (strain JF-5).